The primary structure comprises 224 residues: MPSYIRDHRKRLRERFMTGGAAALPDYELLELVLFRSIPRQDVKPLARLLLDTFGDFNRVLTAPVERLAEVKGVGEAVITDLKILEASAHRMARARVMQRQVISSWDALLDYCHTTMAHRETEQFRVFYLDRKNVLIADEEQARGTVDHVPVYPREVAKRALELNASALILVHNHPSGDPTPSQSDIDMTARIRSACEALGLTLHDHLIIGKSVELSFRAEGYL.

Positions 102-224 constitute an MPN domain; it reads VISSWDALLD…ELSFRAEGYL (123 aa). 3 residues coordinate Zn(2+): His173, His175, and Asp186. The JAMM motif signature appears at 173-186; the sequence is HNHPSGDPTPSQSD.

This sequence belongs to the UPF0758 family.

The sequence is that of UPF0758 protein SPO0054 from Ruegeria pomeroyi (strain ATCC 700808 / DSM 15171 / DSS-3) (Silicibacter pomeroyi).